The primary structure comprises 66 residues: Large ribosomal subunit protein uL29 (66 aa).

Belongs to the universal ribosomal protein uL29 family.

This is Large ribosomal subunit protein uL29 from Ruegeria pomeroyi (strain ATCC 700808 / DSM 15171 / DSS-3) (Silicibacter pomeroyi).